Consider the following 248-residue polypeptide: MILFPAIDLKGGQCVRLKLGDMQQATVYNTDPAAQARSFEDQGFEWLHVVDLDGAFAGHSANGDAVEAILKATDNPVQLGGGIRTLDHIEAWLSRGLRRVILGTVAVRNPDLVIEACRKFPDHVAVGIDAKGGKVAVEGWAEASELGIIELARKFEGAGVAAIIYTDIDRDGILAGINWSSTLELADAVSIPVIASGGLASLDDIRRMLEPDARKLEGAISGRALYDGRIDPKEALALIKAARAKETA.

The Proton acceptor role is filled by Asp8. Catalysis depends on Asp129, which acts as the Proton donor.

This sequence belongs to the HisA/HisF family.

The protein localises to the cytoplasm. The catalysed reaction is 1-(5-phospho-beta-D-ribosyl)-5-[(5-phospho-beta-D-ribosylamino)methylideneamino]imidazole-4-carboxamide = 5-[(5-phospho-1-deoxy-D-ribulos-1-ylimino)methylamino]-1-(5-phospho-beta-D-ribosyl)imidazole-4-carboxamide. It functions in the pathway amino-acid biosynthesis; L-histidine biosynthesis; L-histidine from 5-phospho-alpha-D-ribose 1-diphosphate: step 4/9. The polypeptide is 1-(5-phosphoribosyl)-5-[(5-phosphoribosylamino)methylideneamino] imidazole-4-carboxamide isomerase (Rhizobium johnstonii (strain DSM 114642 / LMG 32736 / 3841) (Rhizobium leguminosarum bv. viciae)).